A 1039-amino-acid polypeptide reads, in one-letter code: Error-prone DNA polymerase (1039 aa).

It belongs to the DNA polymerase type-C family. DnaE2 subfamily.

It localises to the cytoplasm. It catalyses the reaction DNA(n) + a 2'-deoxyribonucleoside 5'-triphosphate = DNA(n+1) + diphosphate. Functionally, DNA polymerase involved in damage-induced mutagenesis and translesion synthesis (TLS). It is not the major replicative DNA polymerase. In Corynebacterium diphtheriae (strain ATCC 700971 / NCTC 13129 / Biotype gravis), this protein is Error-prone DNA polymerase.